The following is a 206-amino-acid chain: Sclerostin domain-containing protein 1 (206 aa).

Residues 1-23 (MLPPAIHFYLLPLACILMKSCLA) form the signal peptide. An N-linked (GlcNAc...) asparagine glycan is attached at Asn-47. 4 cysteine pairs are disulfide-bonded: Cys-75-Cys-133, Cys-89-Cys-147, Cys-100-Cys-163, and Cys-104-Cys-165. One can recognise a CTCK domain in the interval 75 to 170 (CRELRSTKYI…TACKCKRYTR (96 aa)). N-linked (GlcNAc...) asparagine glycosylation occurs at Asn-173. The tract at residues 176–206 (SHNFESMSPAKPVQHHRERKRASKSSKHSMS) is disordered. Over residues 188 to 206 (VQHHRERKRASKSSKHSMS) the composition is skewed to basic residues.

This sequence belongs to the sclerostin family. In terms of assembly, interacts with BMP2, BMP4, BMP6 and BMP7 with high affinity.

The protein resides in the secreted. Directly antagonizes activity of BMP2, BMP4, BMP6 and BMP7 in a dose-dependent manner. Enhances Wnt signaling and inhibits TGF-beta signaling. May be involved in the onset of endometrial receptivity for implantation/sensitization for the decidual cell reaction. The polypeptide is Sclerostin domain-containing protein 1 (SOSTDC1) (Pongo abelii (Sumatran orangutan)).